The chain runs to 141 residues: Hemoglobin subunit alpha (141 aa).

Residues 1–141 (VLSAADKTNV…VATVLTSKYR (141 aa)) form the Globin domain. S3 is modified (phosphoserine). K7 carries the post-translational modification N6-succinyllysine. T8 is subject to Phosphothreonine. K11 carries the N6-succinyllysine modification. At K16 the chain carries N6-acetyllysine; alternate. At K16 the chain carries N6-succinyllysine; alternate. Position 24 is a phosphotyrosine (Y24). The residue at position 35 (S35) is a Phosphoserine. K40 carries the post-translational modification N6-succinyllysine. S49 carries the phosphoserine modification. O2 is bound at residue H58. H87 contacts heme b. S102 is subject to Phosphoserine. A Phosphothreonine modification is found at T108. S124 bears the Phosphoserine mark. Phosphothreonine is present on residues T134 and T137. Position 138 is a phosphoserine (S138).

The protein belongs to the globin family. In terms of assembly, heterotetramer of two alpha chains and two beta chains. As to expression, red blood cells.

Its function is as follows. Involved in oxygen transport from the lung to the various peripheral tissues. In terms of biological role, hemopressin acts as an antagonist peptide of the cannabinoid receptor CNR1. Hemopressin-binding efficiently blocks cannabinoid receptor CNR1 and subsequent signaling. This Ctenodactylus gundi (Northern gundi) protein is Hemoglobin subunit alpha (HBA).